A 437-amino-acid polypeptide reads, in one-letter code: Chaperone SurA (437 aa).

The N-terminal stretch at 1–27 is a signal peptide; sequence MHNHVFKTIARHGLIALFFFFSISAMA. 2 PpiC domains span residues 179–280 and 290–388; these read QDEF…KLLN and VDQT…QVLE.

Its subcellular location is the periplasm. The enzyme catalyses [protein]-peptidylproline (omega=180) = [protein]-peptidylproline (omega=0). In terms of biological role, chaperone involved in the correct folding and assembly of outer membrane proteins. Recognizes specific patterns of aromatic residues and the orientation of their side chains, which are found more frequently in integral outer membrane proteins. May act in both early periplasmic and late outer membrane-associated steps of protein maturation. In Methylobacillus flagellatus (strain ATCC 51484 / DSM 6875 / VKM B-1610 / KT), this protein is Chaperone SurA.